Reading from the N-terminus, the 435-residue chain is Transcription factor tau 55 kDa subunit (435 aa).

The interval glycine 362 to serine 417 is disordered. Serine 365 bears the Phosphoserine mark. Over residues threonine 372–isoleucine 391 the composition is skewed to polar residues. Residues serine 405–serine 417 show a composition bias toward basic and acidic residues.

As to quaternary structure, component of the TFIIIC complex composed of TFC1, TFC3, TFC4, TFC6, TFC7 and TFC8. The subunits are organized in two globular domains, tauA and tauB, connected by a proteolysis-sensitive and flexible linker.

It localises to the nucleus. TFIIIC mediates tRNA and 5S RNA gene activation by binding to intragenic promoter elements. Upstream of the transcription start site, TFIIIC assembles the initiation complex TFIIIB-TFIIIC-tDNA, which is sufficient for RNA polymerase III recruitment and function. Part of the tauA domain of TFIIIC that binds boxA DNA promoter sites of tRNA and similar genes. The polypeptide is Transcription factor tau 55 kDa subunit (TFC7) (Saccharomyces cerevisiae (strain ATCC 204508 / S288c) (Baker's yeast)).